Consider the following 283-residue polypeptide: Bifunctional protein FolD (283 aa).

NADP(+) is bound by residues 165 to 167 (GAS), Ser190, and Ile231.

Belongs to the tetrahydrofolate dehydrogenase/cyclohydrolase family. Homodimer.

It catalyses the reaction (6R)-5,10-methylene-5,6,7,8-tetrahydrofolate + NADP(+) = (6R)-5,10-methenyltetrahydrofolate + NADPH. The catalysed reaction is (6R)-5,10-methenyltetrahydrofolate + H2O = (6R)-10-formyltetrahydrofolate + H(+). The protein operates within one-carbon metabolism; tetrahydrofolate interconversion. Functionally, catalyzes the oxidation of 5,10-methylenetetrahydrofolate to 5,10-methenyltetrahydrofolate and then the hydrolysis of 5,10-methenyltetrahydrofolate to 10-formyltetrahydrofolate. This Bordetella bronchiseptica (strain ATCC BAA-588 / NCTC 13252 / RB50) (Alcaligenes bronchisepticus) protein is Bifunctional protein FolD.